A 509-amino-acid polypeptide reads, in one-letter code: Dihydrolipoyl dehydrogenase, mitochondrial (509 aa).

The N-terminal 35 residues, 1 to 35 (MQSWSRVYCSLAKRGHFNRISHGLQGVSSVPLRTY), are a transit peptide targeting the mitochondrion. Lys-66 carries the post-translational modification N6-acetyllysine; alternate. Lys-66 is modified (N6-succinyllysine; alternate). Residues 71–80 (EKNDTLGGTC) and Lys-89 contribute to the FAD site. The cysteines at positions 80 and 85 are disulfide-linked. Residues Lys-122, Lys-132, and Lys-143 each carry the N6-acetyllysine; alternate modification. Residues Lys-122, Lys-132, and Lys-143 each carry the N6-succinyllysine; alternate modification. Gly-154 is an FAD binding site. N6-succinyllysine is present on residues Lys-159 and Lys-166. 183-185 (TGS) is a binding site for FAD. NAD(+) contacts are provided by residues 220–227 (GAGVIGVE) and Glu-243. Residues Lys-273 and Lys-277 each carry the N6-succinyllysine modification. Residue Val-278 coordinates NAD(+). Ser-285 and Ser-297 each carry phosphoserine. Gly-314 serves as a coordination point for NAD(+). Position 346 is an N6-acetyllysine (Lys-346). Residues Asp-355 and 361-364 (MLAH) each bind FAD. An N6-acetyllysine; alternate modification is found at Lys-410. Lys-410 carries the post-translational modification N6-succinyllysine; alternate. N6-acetyllysine is present on residues Lys-417 and Lys-420. An N6-succinyllysine modification is found at Lys-430. The Proton acceptor role is filled by His-487. The residue at position 502 (Ser-502) is a Phosphoserine. Residue Lys-505 is modified to N6-acetyllysine; alternate. Lys-505 is modified (N6-succinyllysine; alternate).

It belongs to the class-I pyridine nucleotide-disulfide oxidoreductase family. In terms of assembly, homodimer. Part of the multimeric pyruvate dehydrogenase complex that contains multiple copies of pyruvate dehydrogenase (subunits PDHA (PDHA1 or PDHA2) and PDHB, E1), dihydrolipoamide acetyltransferase (DLAT, E2) and lipoamide dehydrogenase (DLD, E3). These subunits are bound to an inner core composed of about 48 DLAT and 12 PDHX molecules (by non covalent bonds). The 2-oxoglutarate dehydrogenase complex is composed of OGDH (2-oxoglutarate dehydrogenase; E1), DLST (dihydrolipoamide succinyltransferase; E2), DLD (dihydrolipoamide dehydrogenase; E3) and the assembly factor KGD4. It contains multiple copies of the three enzymatic components (E1, E2 and E3). In the nucleus, the 2-oxoglutarate dehydrogenase complex associates with KAT2A. Interacts with PDHX. FAD is required as a cofactor. Post-translationally, tyrosine phosphorylated.

It localises to the mitochondrion matrix. The protein localises to the nucleus. The protein resides in the cell projection. It is found in the cilium. Its subcellular location is the flagellum. It localises to the cytoplasmic vesicle. The protein localises to the secretory vesicle. The protein resides in the acrosome. The catalysed reaction is N(6)-[(R)-dihydrolipoyl]-L-lysyl-[protein] + NAD(+) = N(6)-[(R)-lipoyl]-L-lysyl-[protein] + NADH + H(+). Its function is as follows. Lipoamide dehydrogenase is a component of the glycine cleavage system as well as an E3 component of three alpha-ketoacid dehydrogenase complexes (pyruvate-, alpha-ketoglutarate-, and branched-chain amino acid-dehydrogenase complex). The 2-oxoglutarate dehydrogenase complex is mainly active in the mitochondrion. A fraction of the 2-oxoglutarate dehydrogenase complex also localizes in the nucleus and is required for lysine succinylation of histones: associates with KAT2A on chromatin and provides succinyl-CoA to histone succinyltransferase KAT2A. In monomeric form may have additional moonlighting function as serine protease. Involved in the hyperactivation of spermatazoa during capacitation and in the spermatazoal acrosome reaction. The chain is Dihydrolipoyl dehydrogenase, mitochondrial (DLD) from Cricetulus griseus (Chinese hamster).